The primary structure comprises 253 residues: Ribonuclease HII (253 aa).

One can recognise an RNase H type-2 domain in the interval 70 to 253 (PLVAGIDEVG…RSFSPVQNAL (184 aa)). Residues Asp-76, Glu-77, and Asp-168 each contribute to the a divalent metal cation site.

The protein belongs to the RNase HII family. Mn(2+) is required as a cofactor. Mg(2+) serves as cofactor.

The protein localises to the cytoplasm. The enzyme catalyses Endonucleolytic cleavage to 5'-phosphomonoester.. In terms of biological role, endonuclease that specifically degrades the RNA of RNA-DNA hybrids. The chain is Ribonuclease HII from Latilactobacillus sakei subsp. sakei (strain 23K) (Lactobacillus sakei subsp. sakei).